The chain runs to 539 residues: Tetracenomycin B2 monooxygenase-dioxygenase (539 aa).

FAD contacts are provided by Leu15, Glu35, Gln128, and Leu152. The Proton acceptor role is filled by Tyr231. Asp313 contributes to the FAD binding site.

Belongs to the PheA/TfdB FAD monooxygenase family. It depends on FAD as a cofactor.

The enzyme catalyses tetracenomycin B2 + 2 NADPH + 2 O2 + 2 H(+) = 8-demethyltetracenomycin C + 2 NADP(+) + H2O. It carries out the reaction tetracenomycin A2 + 2 NADPH + 2 O2 + 2 H(+) = tetracenomycin C + 2 NADP(+) + H2O. It participates in antibiotic biosynthesis. Involved in the biosynthesis of elloramycin, an antitumor polyketide. In vivo, probably catalyzes the triple hydroxylation of 8-demethyltetracenomycin A2 (tetracenomycin B2) at positions C-4, C-4a and C-12a to give 8-demethyltetracenomycin C (8-DMTC). In vitro, catalyzes the triple hydroxylation of tetracenomycin A2 (TCM A2) to give tetracenomycin C (TCM C). Uses NADPH as an electron donor and requires molecular O(2). In Streptomyces olivaceus, this protein is Tetracenomycin B2 monooxygenase-dioxygenase.